A 326-amino-acid polypeptide reads, in one-letter code: ATP-dependent 6-phosphofructokinase 2 (326 aa).

Residue Gly14 participates in ATP binding. 24-28 (RAVTR) lines the ADP pocket. ATP-binding positions include 75–76 (RC) and 105–108 (GDGS). A Mg(2+)-binding site is contributed by Asp106. Residue 129–131 (TID) coordinates substrate. Asp131 (proton acceptor) is an active-site residue. Arg158 serves as a coordination point for ADP. Substrate-binding positions include Arg166 and 173–175 (MGR). ADP-binding positions include 189-191 (GAE), Lys215, and 217-219 (KNS). Substrate is bound by residues Glu226, Arg250, and 256 to 259 (HLQR).

This sequence belongs to the phosphofructokinase type A (PFKA) family. ATP-dependent PFK group I subfamily. Prokaryotic clade 'B1' sub-subfamily. As to quaternary structure, homotetramer. Mg(2+) is required as a cofactor.

Its subcellular location is the cytoplasm. The catalysed reaction is beta-D-fructose 6-phosphate + ATP = beta-D-fructose 1,6-bisphosphate + ADP + H(+). It functions in the pathway carbohydrate degradation; glycolysis; D-glyceraldehyde 3-phosphate and glycerone phosphate from D-glucose: step 3/4. Its activity is regulated as follows. Allosterically activated by ADP and other diphosphonucleosides, and allosterically inhibited by phosphoenolpyruvate. Its function is as follows. Catalyzes the phosphorylation of D-fructose 6-phosphate to fructose 1,6-bisphosphate by ATP, the first committing step of glycolysis. This is ATP-dependent 6-phosphofructokinase 2 from Bacteroides thetaiotaomicron (strain ATCC 29148 / DSM 2079 / JCM 5827 / CCUG 10774 / NCTC 10582 / VPI-5482 / E50).